An 872-amino-acid chain; its full sequence is Protein SEY1 (872 aa).

Residues Met-1–Gln-749 lie on the Cytoplasmic side of the membrane. Residues Gly-49–Tyr-294 enclose the GB1/RHD3-type G domain. Gly-59 to Ser-66 contacts GTP. Positions Ser-482–Arg-504 form a coiled coil. The tract at residues Leu-676–Asp-704 is disordered. The segment covering Ala-690 to Asp-704 has biased composition (acidic residues). The chain crosses the membrane as a helical span at residues Val-750 to Leu-770. The Lumenal segment spans residues Arg-771 to Pro-773. A helical transmembrane segment spans residues Ala-774–Leu-794. At Trp-795–Phe-872 the chain is on the cytoplasmic side. The segment at Asn-849 to Phe-872 is disordered.

The protein belongs to the TRAFAC class dynamin-like GTPase superfamily. GB1/RHD3 GTPase family. RHD3 subfamily.

Its subcellular location is the endoplasmic reticulum membrane. In terms of biological role, cooperates with the reticulon proteins and tubule-shaping DP1 family proteins to generate and maintain the structure of the tubular endoplasmic reticulum network. Has GTPase activity, which is required for its function in ER organization. In Paracoccidioides brasiliensis (strain Pb03), this protein is Protein SEY1.